The primary structure comprises 149 residues: Transcriptional repressor NrdR (149 aa).

A zinc finger spans residues 3–34 (CPFCSHSETQVVETRISEDGDSIRRRRQCASC). An ATP-cone domain is found at 49 to 139 (PAIVKKDGRR…VYRSFEDIDE (91 aa)).

Belongs to the NrdR family. It depends on Zn(2+) as a cofactor.

Functionally, negatively regulates transcription of bacterial ribonucleotide reductase nrd genes and operons by binding to NrdR-boxes. This Albidiferax ferrireducens (strain ATCC BAA-621 / DSM 15236 / T118) (Rhodoferax ferrireducens) protein is Transcriptional repressor NrdR.